We begin with the raw amino-acid sequence, 585 residues long: L-gulonolactone oxidase 3 (585 aa).

The signal sequence occupies residues 1-24; it reads MRYSHTLQQFSILSFFVTIWTVQS. Positions 51–233 constitute an FAD-binding PCMH-type domain; that stretch reads KTCHAANVTY…SKVKLSIEKA (183 aa).

Belongs to the oxygen-dependent FAD-linked oxidoreductase family. FAD is required as a cofactor.

The protein resides in the vacuole. It catalyses the reaction L-gulono-1,4-lactone + O2 = L-ascorbate + H2O2 + H(+). It participates in cofactor biosynthesis; L-ascorbate biosynthesis. Functionally, catalyzes the oxidation of L-gulono-1,4-lactone to ascorbic acid. L-gulono-1,4-lactone is oxidized to hydrogen peroxide and L-xylo-hexulonolactone which spontaneously isomerizes to L-ascorbate. In Arabidopsis thaliana (Mouse-ear cress), this protein is L-gulonolactone oxidase 3.